Reading from the N-terminus, the 147-residue chain is Deoxyuridine 5'-triphosphate nucleotidohydrolase (147 aa).

Mg(2+) is bound at residue R24. DUTP-binding positions include 68–70, 82–85, Y88, G93, I95, and R111; these read PRS and GVID.

It belongs to the dUTPase family.

It carries out the reaction dUTP + H2O = dUMP + diphosphate + H(+). Its function is as follows. This enzyme is involved in nucleotide metabolism: it produces dUMP, the immediate precursor of thymidine nucleotides and it decreases the intracellular concentration of dUTP so that uracil cannot be incorporated into DNA. The sequence is that of Deoxyuridine 5'-triphosphate nucleotidohydrolase (OPG046) from Homo sapiens (Human).